A 347-amino-acid polypeptide reads, in one-letter code: Selenide, water dikinase (347 aa).

The active site involves Cys-17. ATP-binding positions include Lys-20 and Thr-48–Asp-50. Asp-51 is a binding site for Mg(2+). ATP-binding positions include Asp-68, Asp-91, and Gly-139 to Ser-141. Asp-91 contacts Mg(2+). Asp-227 provides a ligand contact to Mg(2+).

Belongs to the selenophosphate synthase 1 family. Class I subfamily. As to quaternary structure, homodimer. It depends on Mg(2+) as a cofactor.

The catalysed reaction is hydrogenselenide + ATP + H2O = selenophosphate + AMP + phosphate + 2 H(+). Synthesizes selenophosphate from selenide and ATP. The protein is Selenide, water dikinase of Escherichia coli O157:H7.